Here is a 1443-residue protein sequence, read N- to C-terminus: DNA polymerase III PolC-type (1443 aa).

One can recognise an Exonuclease domain in the interval 408-567 (FVIFDIETTG…YDTQALKKVF (160 aa)).

The protein belongs to the DNA polymerase type-C family. PolC subfamily.

Its subcellular location is the cytoplasm. It carries out the reaction DNA(n) + a 2'-deoxyribonucleoside 5'-triphosphate = DNA(n+1) + diphosphate. In terms of biological role, required for replicative DNA synthesis. This DNA polymerase also exhibits 3' to 5' exonuclease activity. This Mycoplasma pneumoniae (strain ATCC 29342 / M129 / Subtype 1) (Mycoplasmoides pneumoniae) protein is DNA polymerase III PolC-type.